The chain runs to 1074 residues: DNA primase (1074 aa).

A CHC2-type zinc finger spans residues 1012–1052 (CVRFKHARARRASARSYLALNVDAHGRLCVCVIQQCFAAKC).

It belongs to the herpesviridae DNA primase family. Associates with the helicase and the primase-associated factor to form the helicase-primase factor.

It localises to the host nucleus. Essential component of the helicase/primase complex. Unwinds the DNA at the replication forks and generates single-stranded DNA for both leading and lagging strand synthesis. The primase initiates primer synthesis and thereby produces large amount of short RNA primers on the lagging strand that the polymerase elongates using dNTPs. In Gallus gallus (Chicken), this protein is DNA primase (MDV066).